Consider the following 262-residue polypeptide: Thiazole synthase (262 aa).

Lysine 105 serves as the catalytic Schiff-base intermediate with DXP. Residues glycine 166, 192 to 193, and 214 to 215 contribute to the 1-deoxy-D-xylulose 5-phosphate site; these read AG and NT.

The protein belongs to the ThiG family. In terms of assembly, homotetramer. Forms heterodimers with either ThiH or ThiS.

It is found in the cytoplasm. The enzyme catalyses [ThiS sulfur-carrier protein]-C-terminal-Gly-aminoethanethioate + 2-iminoacetate + 1-deoxy-D-xylulose 5-phosphate = [ThiS sulfur-carrier protein]-C-terminal Gly-Gly + 2-[(2R,5Z)-2-carboxy-4-methylthiazol-5(2H)-ylidene]ethyl phosphate + 2 H2O + H(+). It functions in the pathway cofactor biosynthesis; thiamine diphosphate biosynthesis. Catalyzes the rearrangement of 1-deoxy-D-xylulose 5-phosphate (DXP) to produce the thiazole phosphate moiety of thiamine. Sulfur is provided by the thiocarboxylate moiety of the carrier protein ThiS. In vitro, sulfur can be provided by H(2)S. The sequence is that of Thiazole synthase from Phenylobacterium zucineum (strain HLK1).